We begin with the raw amino-acid sequence, 141 residues long: Hemoglobin subunit alpha-D (141 aa).

Residues 1–141 (MLTADDKKLI…VASVLAEKYR (141 aa)) enclose the Globin domain. Residues His-58 and His-87 each contribute to the heme b site.

This sequence belongs to the globin family. As to quaternary structure, heterotetramer of two alpha-D chains and two beta chains. Red blood cells.

In terms of biological role, involved in oxygen transport from the lung to the various peripheral tissues. The chain is Hemoglobin subunit alpha-D (HBAD) from Rhea americana (Greater rhea).